Consider the following 300-residue polypeptide: Diphthine methyl ester synthase (300 aa).

Residues L9, D85, G88, 113 to 114 (SV), and L164 contribute to the S-adenosyl-L-methionine site. S172 carries the phosphoserine modification. Residues L222 and H247 each coordinate S-adenosyl-L-methionine. A Phosphoserine modification is found at S298.

This sequence belongs to the diphthine synthase family.

It is found in the cytoplasm. The enzyme catalyses 2-[(3S)-amino-3-carboxypropyl]-L-histidyl-[translation elongation factor 2] + 4 S-adenosyl-L-methionine = diphthine methyl ester-[translation elongation factor 2] + 4 S-adenosyl-L-homocysteine + 3 H(+). It participates in protein modification; peptidyl-diphthamide biosynthesis. S-adenosyl-L-methionine-dependent methyltransferase that catalyzes four methylations of the modified target histidine residue in translation elongation factor 2 (EF-2), to form an intermediate called diphthine methyl ester. The four successive methylation reactions represent the second step of diphthamide biosynthesis. The sequence is that of Diphthine methyl ester synthase (DPH5) from Saccharomyces cerevisiae (strain ATCC 204508 / S288c) (Baker's yeast).